Consider the following 568-residue polypeptide: Acyl-CoA ligase gloD (568 aa).

ATP contacts are provided by residues 211 to 219 (TSGTSGFLK), 352 to 357 (PGYGLT), D436, R455, and K553. Residues 282-352 (DMQIALKSVQ…QLCPEWEINP (71 aa)) are SBD1. The segment at 353–415 (GYGLTESFVC…VRSPSVMKEY (63 aa)) is SBD2.

The protein belongs to the ATP-dependent AMP-binding enzyme family.

The protein operates within mycotoxin biosynthesis. In terms of biological role, acyl-CoA ligase; part of the gene cluster that mediates the biosynthesis of pneumocandins, lipohexapeptides of the echinocandin family that prevent fungal cell wall formation by non-competitive inhibition of beta-1,3-glucan synthase. The 10,12-dimethylmyristoyl side chain is synthesized by the reducing polyketide synthase gloL/GLPKS4. The thioesterase gloN/GLHYD exclusively interacts with gloL/GLPKS4 to maintain turnover of the polyketide side chain. The 10R,12S-dimethylmyristic acid is then transferred to the first thiolation domain of the nonribosomal peptide synthetase gloA/GLNRPS4 by the acyl-AMP ligase gloD/GLligase, followed by its acylation to L-ornithine to trigger elongation of the cyclic hexapeptide. L-ornithine, 4R-hydroxyl-L-proline (generated from L-proline by the dioxygenase gloF/GLOXY2), 3S-hydroxyl-L-homotyrosine (generated by gloG/GLHtyB, gloH/GLHtyA, gloI/GLHtyC, gloJ/GLHtyD and hydroxylated at C-3 by the dioxygenase gloM/GLOXY1), 3R-hydroxyl-L-glutamine (generated from L-glutamine probably by the dioxygenase gloE/GLOXY3) and 3S-hydroxyl-L-proline (generated from L-proline by the dioxygenase gloF/GLOXY2 to yield pneumocandin B0), or 3S-hydroxyl-4S-methyl-L-proline (generated from L-leucine by the dioxygenase gloC/GLOXY4 to yield pneumocandin A0) are sequentially added to the growing chain. The last C domain of gloA/GLNRPS4 is proposed to be responsible for cyclization by condensation to form the peptide bond between L-ornithine and 3S-hydroxyl-4S-methyl-L-proline (for pneumocandin A0) or 3S-hydroxyl-L-proline (for pneumocandin B0). Finally, the subsequent C-4 hydroxylation of 3S-hydroxyl-L-homotyrosine and L-ornithine dihydroxylation at C-4 and C-5 are performed by the cytochrome P450 monooxygenases gloP/GLP450-1 and gloO/GLP450-2, respectively. In Glarea lozoyensis (strain ATCC 20868 / MF5171), this protein is Acyl-CoA ligase gloD.